Here is a 1068-residue protein sequence, read N- to C-terminus: DNA-directed RNA polymerase subunit beta (1068 aa).

Belongs to the RNA polymerase beta chain family. In plastids the minimal PEP RNA polymerase catalytic core is composed of four subunits: alpha, beta, beta', and beta''. When a (nuclear-encoded) sigma factor is associated with the core the holoenzyme is formed, which can initiate transcription.

Its subcellular location is the plastid. The protein localises to the chloroplast. It catalyses the reaction RNA(n) + a ribonucleoside 5'-triphosphate = RNA(n+1) + diphosphate. Functionally, DNA-dependent RNA polymerase catalyzes the transcription of DNA into RNA using the four ribonucleoside triphosphates as substrates. The protein is DNA-directed RNA polymerase subunit beta of Staurastrum punctulatum (Green alga).